Here is a 145-residue protein sequence, read N- to C-terminus: Large-conductance mechanosensitive channel (145 aa).

A run of 3 helical transmembrane segments spans residues Val-14 to Leu-34, Leu-38 to Pro-58, and Gly-81 to Val-101.

It belongs to the MscL family. As to quaternary structure, homopentamer.

It localises to the cell inner membrane. Functionally, channel that opens in response to stretch forces in the membrane lipid bilayer. May participate in the regulation of osmotic pressure changes within the cell. This chain is Large-conductance mechanosensitive channel, found in Rhizobium leguminosarum bv. trifolii (strain WSM2304).